Reading from the N-terminus, the 167-residue chain is Phosphopantetheine adenylyltransferase (167 aa).

Residue S8 participates in substrate binding. ATP contacts are provided by residues 8–9 and H16; that span reads SF. The substrate site is built by K40, L74, and R88. ATP is bound by residues 89-91, E99, and 123-129; these read GLR and WSFVSSS.

This sequence belongs to the bacterial CoaD family. As to quaternary structure, homohexamer. Mg(2+) is required as a cofactor.

It is found in the cytoplasm. It carries out the reaction (R)-4'-phosphopantetheine + ATP + H(+) = 3'-dephospho-CoA + diphosphate. Its pathway is cofactor biosynthesis; coenzyme A biosynthesis; CoA from (R)-pantothenate: step 4/5. Reversibly transfers an adenylyl group from ATP to 4'-phosphopantetheine, yielding dephospho-CoA (dPCoA) and pyrophosphate. This chain is Phosphopantetheine adenylyltransferase, found in Deinococcus radiodurans (strain ATCC 13939 / DSM 20539 / JCM 16871 / CCUG 27074 / LMG 4051 / NBRC 15346 / NCIMB 9279 / VKM B-1422 / R1).